A 420-amino-acid chain; its full sequence is D-tagatose-1,6-bisphosphate aldolase subunit GatZ (420 aa).

This sequence belongs to the GatZ/KbaZ family. GatZ subfamily. As to quaternary structure, forms a complex with GatY.

Its pathway is carbohydrate metabolism; D-tagatose 6-phosphate degradation; D-glyceraldehyde 3-phosphate and glycerone phosphate from D-tagatose 6-phosphate: step 2/2. Its function is as follows. Component of the tagatose-1,6-bisphosphate aldolase GatYZ that is required for full activity and stability of the Y subunit. Could have a chaperone-like function for the proper and stable folding of GatY. When expressed alone, GatZ does not show any aldolase activity. Is involved in the catabolism of galactitol. This chain is D-tagatose-1,6-bisphosphate aldolase subunit GatZ, found in Shigella boydii serotype 18 (strain CDC 3083-94 / BS512).